Here is a 415-residue protein sequence, read N- to C-terminus: L-cysteine:1D-myo-inositol 2-amino-2-deoxy-alpha-D-glucopyranoside ligase 2 (415 aa).

Cys44 is a binding site for Zn(2+). Residues 44-47 (CGIT), Thr59, and 82-84 (NIT) each bind L-cysteinyl-5'-AMP. The 'HIGH' region motif lies at 46-56 (ITPYDSTHLGH). Positions 188 to 193 (ERGGDP) match the 'ERGGDP' region motif. Trp228 contributes to the L-cysteinyl-5'-AMP binding site. Cys232 provides a ligand contact to Zn(2+). Residue 250–252 (GSD) participates in L-cysteinyl-5'-AMP binding. Residue His257 coordinates Zn(2+). Residue Ile284 participates in L-cysteinyl-5'-AMP binding. The 'KMSKS' region motif lies at 290 to 294 (KMSKS).

It belongs to the class-I aminoacyl-tRNA synthetase family. MshC subfamily. Monomer. The cofactor is Zn(2+).

The catalysed reaction is 1D-myo-inositol 2-amino-2-deoxy-alpha-D-glucopyranoside + L-cysteine + ATP = 1D-myo-inositol 2-(L-cysteinylamino)-2-deoxy-alpha-D-glucopyranoside + AMP + diphosphate + H(+). Catalyzes the ATP-dependent condensation of GlcN-Ins and L-cysteine to form L-Cys-GlcN-Ins. This Corynebacterium jeikeium (strain K411) protein is L-cysteine:1D-myo-inositol 2-amino-2-deoxy-alpha-D-glucopyranoside ligase 2.